A 101-amino-acid polypeptide reads, in one-letter code: Large ribosomal subunit protein bL21 (101 aa).

The protein belongs to the bacterial ribosomal protein bL21 family. In terms of assembly, part of the 50S ribosomal subunit. Contacts protein L20.

This protein binds to 23S rRNA in the presence of protein L20. This is Large ribosomal subunit protein bL21 from Corynebacterium efficiens (strain DSM 44549 / YS-314 / AJ 12310 / JCM 11189 / NBRC 100395).